We begin with the raw amino-acid sequence, 547 residues long: Glucose-6-phosphate isomerase (547 aa).

Glu351 serves as the catalytic Proton donor. Catalysis depends on residues His382 and Lys511.

Belongs to the GPI family.

It localises to the cytoplasm. The enzyme catalyses alpha-D-glucose 6-phosphate = beta-D-fructose 6-phosphate. It functions in the pathway carbohydrate biosynthesis; gluconeogenesis. Its pathway is carbohydrate degradation; glycolysis; D-glyceraldehyde 3-phosphate and glycerone phosphate from D-glucose: step 2/4. Catalyzes the reversible isomerization of glucose-6-phosphate to fructose-6-phosphate. The sequence is that of Glucose-6-phosphate isomerase from Xanthobacter autotrophicus (strain ATCC BAA-1158 / Py2).